The primary structure comprises 205 residues: LexA repressor (205 aa).

A DNA-binding region (H-T-H motif) is located at residues Arg28–Lys48. Residues Ser122 and Lys159 each act as for autocatalytic cleavage activity in the active site.

It belongs to the peptidase S24 family. Homodimer.

The catalysed reaction is Hydrolysis of Ala-|-Gly bond in repressor LexA.. In terms of biological role, represses a number of genes involved in the response to DNA damage (SOS response), including recA and lexA. In the presence of single-stranded DNA, RecA interacts with LexA causing an autocatalytic cleavage which disrupts the DNA-binding part of LexA, leading to derepression of the SOS regulon and eventually DNA repair. The polypeptide is LexA repressor (Shewanella denitrificans (strain OS217 / ATCC BAA-1090 / DSM 15013)).